We begin with the raw amino-acid sequence, 646 residues long: Protein kinase YegI (646 aa).

The region spanning 13–300 is the Protein kinase domain; sequence VTPGRELGKG…KAWVAALDLL (288 aa). ATP-binding positions include 19-27 and lysine 39; that span reads LGKGGEGAV. Residue aspartate 141 is the Proton acceptor of the active site.

Post-translationally, autophosphorylated.

Its function is as follows. Probable serine/threonine kinase. The chain is Protein kinase YegI (yegI) from Escherichia coli O157:H7.